The following is a 251-amino-acid chain: Imidazole glycerol phosphate synthase subunit HisF (251 aa).

Residues D11 and D130 contribute to the active site.

Belongs to the HisA/HisF family. As to quaternary structure, heterodimer of HisH and HisF.

It is found in the cytoplasm. It carries out the reaction 5-[(5-phospho-1-deoxy-D-ribulos-1-ylimino)methylamino]-1-(5-phospho-beta-D-ribosyl)imidazole-4-carboxamide + L-glutamine = D-erythro-1-(imidazol-4-yl)glycerol 3-phosphate + 5-amino-1-(5-phospho-beta-D-ribosyl)imidazole-4-carboxamide + L-glutamate + H(+). It participates in amino-acid biosynthesis; L-histidine biosynthesis; L-histidine from 5-phospho-alpha-D-ribose 1-diphosphate: step 5/9. In terms of biological role, IGPS catalyzes the conversion of PRFAR and glutamine to IGP, AICAR and glutamate. The HisF subunit catalyzes the cyclization activity that produces IGP and AICAR from PRFAR using the ammonia provided by the HisH subunit. This Chlorobium phaeovibrioides (strain DSM 265 / 1930) (Prosthecochloris vibrioformis (strain DSM 265)) protein is Imidazole glycerol phosphate synthase subunit HisF.